The primary structure comprises 315 residues: tRNA dimethylallyltransferase (315 aa).

An ATP-binding site is contributed by 13–20 (GPTASGKS). 15-20 (TASGKS) is a binding site for substrate. Interaction with substrate tRNA stretches follow at residues 38 to 41 (DSMQ) and 162 to 166 (QRLAR).

It belongs to the IPP transferase family. Monomer. The cofactor is Mg(2+).

It carries out the reaction adenosine(37) in tRNA + dimethylallyl diphosphate = N(6)-dimethylallyladenosine(37) in tRNA + diphosphate. Its function is as follows. Catalyzes the transfer of a dimethylallyl group onto the adenine at position 37 in tRNAs that read codons beginning with uridine, leading to the formation of N6-(dimethylallyl)adenosine (i(6)A). In Paramagnetospirillum magneticum (strain ATCC 700264 / AMB-1) (Magnetospirillum magneticum), this protein is tRNA dimethylallyltransferase.